A 552-amino-acid polypeptide reads, in one-letter code: DUF724 domain-containing protein 10 (552 aa).

The interval 308 to 361 (SSLTQGSGDKTEVETQRKTFPKKTLPRNQNGSGNDSTLENENSNRKRKREENLC) is disordered. Residues 333–348 (PRNQNGSGNDSTLENE) are compositionally biased toward polar residues. A DUF724 domain is found at 371 to 543 (ILFEKKLPVW…LEFQATASAP (173 aa)).

As to expression, expressed at low levels in leaves, stems, flowers and siliques.

Its function is as follows. May be involved in the polar growth of plant cells via transportation of RNAs. The polypeptide is DUF724 domain-containing protein 10 (Arabidopsis thaliana (Mouse-ear cress)).